Reading from the N-terminus, the 169-residue chain is Probable inosine/xanthosine triphosphatase (169 aa).

Position 58 (aspartate 58) interacts with Mg(2+).

It belongs to the YjjX NTPase family. Homodimer. The cofactor is Mg(2+). Mn(2+) serves as cofactor.

It catalyses the reaction XTP + H2O = XDP + phosphate + H(+). The catalysed reaction is ITP + H2O = IDP + phosphate + H(+). Functionally, phosphatase that hydrolyzes non-canonical purine nucleotides such as XTP and ITP to their respective diphosphate derivatives. Probably excludes non-canonical purines from DNA/RNA precursor pool, thus preventing their incorporation into DNA/RNA and avoiding chromosomal lesions. The protein is Probable inosine/xanthosine triphosphatase of Archaeoglobus fulgidus (strain ATCC 49558 / DSM 4304 / JCM 9628 / NBRC 100126 / VC-16).